The sequence spans 496 residues: L-arabinose isomerase (496 aa).

Mn(2+) contacts are provided by Glu-302, Glu-329, His-346, and His-445.

The protein belongs to the arabinose isomerase family. It depends on Mn(2+) as a cofactor.

It catalyses the reaction beta-L-arabinopyranose = L-ribulose. Its pathway is carbohydrate degradation; L-arabinose degradation via L-ribulose; D-xylulose 5-phosphate from L-arabinose (bacterial route): step 1/3. Its function is as follows. Catalyzes the conversion of L-arabinose to L-ribulose. This chain is L-arabinose isomerase, found in Thermotoga neapolitana (strain ATCC 49049 / DSM 4359 / NBRC 107923 / NS-E).